The chain runs to 377 residues: uncharacterized protein (377 aa).

7 consecutive transmembrane segments (helical) span residues 21–41 (WLLA…LVLF), 66–86 (LVTF…FGLG), 163–183 (IGVL…GIVL), 197–217 (AILF…IAII), 236–256 (FYMG…YHIF), 292–312 (VNLI…FLIL), and 339–359 (IYFL…ELLF).

Its subcellular location is the cell membrane. This is an uncharacterized protein from Mycoplasma pneumoniae (strain ATCC 29342 / M129 / Subtype 1) (Mycoplasmoides pneumoniae).